Consider the following 376-residue polypeptide: N-acetyldiaminopimelate deacetylase (376 aa).

The active site involves aspartate 69. Glutamate 128 (proton acceptor) is an active-site residue.

The protein belongs to the peptidase M20A family. N-acetyldiaminopimelate deacetylase subfamily.

The enzyme catalyses N-acetyl-(2S,6S)-2,6-diaminopimelate + H2O = (2S,6S)-2,6-diaminopimelate + acetate. It functions in the pathway amino-acid biosynthesis; L-lysine biosynthesis via DAP pathway; LL-2,6-diaminopimelate from (S)-tetrahydrodipicolinate (acetylase route): step 3/3. Catalyzes the conversion of N-acetyl-diaminopimelate to diaminopimelate and acetate. The sequence is that of N-acetyldiaminopimelate deacetylase from Streptococcus pneumoniae (strain Hungary19A-6).